The following is a 381-amino-acid chain: Creatine kinase M-type (381 aa).

The Phosphagen kinase N-terminal domain maps to 11-98; the sequence is KLNYKPQEEY…FDPIIQDRHG (88 aa). The 243-residue stretch at 125–367 folds into the Phosphagen kinase C-terminal domain; sequence YVLSSRVRTG…KLMVEMEKKL (243 aa). 128–132 is a binding site for ATP; the sequence is SSRVR. Phosphoserine is present on Ser164. The residue at position 166 (Thr166) is a Phosphothreonine. Ser178 carries the post-translational modification Phosphoserine. Position 180 is a phosphothreonine (Thr180). Residue His191 coordinates ATP. Position 199 is a phosphoserine (Ser199). Residues Arg236 and Arg292 each coordinate ATP. Phosphothreonine occurs at positions 313 and 322. Residues 320–325 and Asp335 each bind ATP; that span reads RGTGGV. A Phosphoserine modification is found at Ser372.

This sequence belongs to the ATP:guanido phosphotransferase family. In terms of assembly, dimer of identical or non-identical chains, which can be either B (brain type) or M (muscle type). With MM being the major form in skeletal muscle and myocardium, MB existing in myocardium, and BB existing in many tissues, especially brain.

Its subcellular location is the cytoplasm. The enzyme catalyses creatine + ATP = N-phosphocreatine + ADP + H(+). Functionally, reversibly catalyzes the transfer of phosphate between ATP and various phosphogens (e.g. creatine phosphate). Creatine kinase isoenzymes play a central role in energy transduction in tissues with large, fluctuating energy demands, such as skeletal muscle, heart, brain and spermatozoa. The chain is Creatine kinase M-type (Ckm) from Mus musculus (Mouse).